Reading from the N-terminus, the 544-residue chain is Chaperonin GroEL (544 aa).

ATP contacts are provided by residues 30 to 33, lysine 51, 87 to 91, glycine 415, 481 to 483, and aspartate 497; these read TLGP, DGTTT, and DAL.

The protein belongs to the chaperonin (HSP60) family. Forms a cylinder of 14 subunits composed of two heptameric rings stacked back-to-back. Interacts with the co-chaperonin GroES.

It is found in the cytoplasm. The enzyme catalyses ATP + H2O + a folded polypeptide = ADP + phosphate + an unfolded polypeptide.. Together with its co-chaperonin GroES, plays an essential role in assisting protein folding. The GroEL-GroES system forms a nano-cage that allows encapsulation of the non-native substrate proteins and provides a physical environment optimized to promote and accelerate protein folding. The sequence is that of Chaperonin GroEL from Chlamydia trachomatis serovar D (strain ATCC VR-885 / DSM 19411 / UW-3/Cx).